The chain runs to 83 residues: Small ribosomal subunit protein bS16 (83 aa).

The protein belongs to the bacterial ribosomal protein bS16 family.

The protein is Small ribosomal subunit protein bS16 of Pseudomonas entomophila (strain L48).